The primary structure comprises 421 residues: E3 ubiquitin-protein ligase RMD5 (421 aa).

Positions Glu-176–Glu-236 constitute a CTLH domain. An RING-Gid-type zinc finger spans residues Cys-361 to Cys-404.

This sequence belongs to the RMD5/GID2 family. In terms of assembly, identified in the GID/CTLH complex. In the absence of stress, the complex exists as an inactive anticipatory complex (GID(Ant)), composed of VID30/GID1, the E3 ubiquitin-ligase RMD5/GID2, VID28/GID5, GID8, and the RING-like subunit FYV10/GID9, awaiting a substrate receptor to form the active E3 ligase complex. When cells are shifted to glucose-containing medium, the substrate receptor VID24/GID4 is induced and becomes part of the complex, named GID(SR4). Additionally, GID7 transforms the GID(SR4) E3 ligase core into a higher-order supramolecular assembly (Chelator-GID(SR4)) specifically tailored for FBP1 ubiquitination. Under osmotic or heat stress, the substrate receptor GID10 is induced and becomes part of the complex, named GID(SR10). Within the GID complex, interacts directly with GID8, FYV10/GID9 and VID28/GID5.

The protein localises to the cytoplasm. It carries out the reaction S-ubiquitinyl-[E2 ubiquitin-conjugating enzyme]-L-cysteine + [acceptor protein]-L-lysine = [E2 ubiquitin-conjugating enzyme]-L-cysteine + N(6)-ubiquitinyl-[acceptor protein]-L-lysine.. It participates in protein modification; protein ubiquitination. Functionally, E3 ubiquitin-protein ligase component of the GID E3 ligase complex recruiting N termini and catalyzing ubiquitination of proteins targeted for degradation. GID E3 is regulated through assembly with interchangeable N-degron-binding substrate receptors induced by distinct environmental perturbations. Required for the adaptation to the presence of glucose in the growth medium; mediates in association with the substrate receptor VID24/GID4 the degradation of enzymes involved in gluconeogenesis when cells are shifted to glucose-containing medium. Required for proteasome-dependent catabolite degradation of fructose-1,6-bisphosphatase (FBP1), malate dehydrogenase (MDH2), and other gluconeogenic enzymes. This chain is E3 ubiquitin-protein ligase RMD5, found in Saccharomyces cerevisiae (strain ATCC 204508 / S288c) (Baker's yeast).